The sequence spans 267 residues: L-aspartate dehydrogenase (267 aa).

Residues A124 and N190 each contribute to the NAD(+) site. H218 is a catalytic residue.

It belongs to the L-aspartate dehydrogenase family.

It carries out the reaction L-aspartate + NADP(+) + H2O = oxaloacetate + NH4(+) + NADPH + H(+). The catalysed reaction is L-aspartate + NAD(+) + H2O = oxaloacetate + NH4(+) + NADH + H(+). It functions in the pathway cofactor biosynthesis; NAD(+) biosynthesis; iminoaspartate from L-aspartate (dehydrogenase route): step 1/1. In terms of biological role, specifically catalyzes the NAD or NADP-dependent dehydrogenation of L-aspartate to iminoaspartate. This Methanococcus maripaludis (strain C5 / ATCC BAA-1333) protein is L-aspartate dehydrogenase.